The chain runs to 456 residues: MAEAEAEAAGAGAGAGPARRTTRVGRYELGKTIGEGSFAKVKVARDTRTGDTLAIKVLDRNHVLRHKMVEQIKREISTMKLIKHPNVVQLHEVMASKSKIYMVLEYVDGGELFDKIVNSGRLGEDEARRYFHQLINAVDYCHSRGVYHRDLKPENLLLDSHGALKVSDFGLSAFAPQTKEDGLLHTACGTPNYVAPEVLADKGYDGMAADVWSCGIILFVLMAGYLPFDDPNLMTLYKLICKAKVSCPHWFSSGAKKFIKRILDPNPCTRITIAQILEDDWFKKDYKPPLFEQGEDVSLDDVDAAFDCSEENLVAEKREKPESMNAFALISRSQGFNLGNLFEKEMMGMVKRETSFTSQCTPQEIMSKIEEACGPLGFNVRKQNYKMKLKGDKTGRKGYLSVATEVFEVAPSLHMVELRKTGGDTLEFHNFYNNFSSELKDIVWKSESDAKAAKKR.

Residues 27-282 (YELGKTIGEG…IAQILEDDWF (256 aa)) form the Protein kinase domain. ATP-binding positions include 33–41 (IGEGSFAKV) and K56. The Proton acceptor role is filled by D150. An activation loop region spans residues 168–197 (DFGLSAFAPQTKEDGLLHTACGTPNYVAPE). Positions 318–343 (REKPESMNAFALISRSQGFNLGNLFE) constitute an NAF domain. A PPI region spans residues 351–380 (KRETSFTSQCTPQEIMSKIEEACGPLGFNV).

The protein belongs to the protein kinase superfamily. CAMK Ser/Thr protein kinase family. SNF1 subfamily. The cofactor is Mn(2+).

The catalysed reaction is L-seryl-[protein] + ATP = O-phospho-L-seryl-[protein] + ADP + H(+). It catalyses the reaction L-threonyl-[protein] + ATP = O-phospho-L-threonyl-[protein] + ADP + H(+). CIPK serine-threonine protein kinases interact with CBL proteins. Binding of a CBL protein to the regulatory NAF domain of CIPK protein lead to the activation of the kinase in a calcium-dependent manner. This Oryza sativa subsp. japonica (Rice) protein is CBL-interacting protein kinase 9 (CIPK9).